The primary structure comprises 278 residues: Energy-coupling factor transporter ATP-binding protein EcfA (278 aa).

The region spanning 5–240 is the ABC transporter domain; sequence LETKNLVYNY…KEVIDEADLR (236 aa). 38–45 is an ATP binding site; the sequence is GHNGAGKS.

This sequence belongs to the ABC transporter superfamily. Energy-coupling factor EcfA family. In terms of assembly, forms a stable energy-coupling factor (ECF) transporter complex composed of 2 membrane-embedded substrate-binding proteins (S component), 2 ATP-binding proteins (A component) and 2 transmembrane proteins (T component).

The protein resides in the cell membrane. ATP-binding (A) component of a common energy-coupling factor (ECF) ABC-transporter complex. Unlike classic ABC transporters this ECF transporter provides the energy necessary to transport a number of different substrates. The sequence is that of Energy-coupling factor transporter ATP-binding protein EcfA from Methanosphaera stadtmanae (strain ATCC 43021 / DSM 3091 / JCM 11832 / MCB-3).